A 211-amino-acid chain; its full sequence is Phosphoglycerate mutase (211 aa).

Residues 14 to 21 (RHGESEWN) and 27 to 28 (TG) each bind substrate. His15 acts as the Tele-phosphohistidine intermediate in catalysis. At Thr37 the chain carries Phosphothreonine. Ser62 is modified (phosphoserine). Residues Arg66, 93–96 (ERYY), Lys104, 120–121 (RR), and 164–165 (GN) contribute to the substrate site. Glu93 serves as the catalytic Proton donor/acceptor. Phosphotyrosine is present on Tyr96. A Phosphoserine modification is found at Ser166.

It belongs to the phosphoglycerate mutase family. BPG-dependent PGAM subfamily. As to quaternary structure, monomer. Post-translationally, the N-terminus is blocked.

It carries out the reaction (2R)-2-phosphoglycerate = (2R)-3-phosphoglycerate. It functions in the pathway carbohydrate degradation; glycolysis; pyruvate from D-glyceraldehyde 3-phosphate: step 3/5. This is Phosphoglycerate mutase (gpm1) from Schizosaccharomyces pombe (strain 972 / ATCC 24843) (Fission yeast).